A 261-amino-acid polypeptide reads, in one-letter code: Protein FAM216A (261 aa).

A disordered region spans residues 1–52 (MPSRCPGVAGPPALARTEGSEGSAGQSYHQNSKGTGEQHKAERIKEGHRMSS). The segment covering 23-35 (SAGQSYHQNSKGT) has biased composition (polar residues). Basic and acidic residues predominate over residues 36–49 (GEQHKAERIKEGHR).

It belongs to the FAM216 family.

In Rattus norvegicus (Rat), this protein is Protein FAM216A (Fam216a).